The primary structure comprises 441 residues: Ribosomal protein uS12 methylthiotransferase RimO (441 aa).

The 111-residue stretch at 8–118 folds into the MTTase N-terminal domain; it reads PKIGFVSLGC…VLQHVHHYVP (111 aa). [4Fe-4S] cluster is bound by residues Cys-17, Cys-53, Cys-82, Cys-150, Cys-154, and Cys-157. The 238-residue stretch at 136-373 folds into the Radical SAM core domain; it reads LTPRHYAYLK…MQLQQQISAE (238 aa). Residues 376-441 enclose the TRAM domain; it reads QEKVGREILV…DEYDLWGSRV (66 aa).

Belongs to the methylthiotransferase family. RimO subfamily. [4Fe-4S] cluster is required as a cofactor.

The protein localises to the cytoplasm. It catalyses the reaction L-aspartate(89)-[ribosomal protein uS12]-hydrogen + (sulfur carrier)-SH + AH2 + 2 S-adenosyl-L-methionine = 3-methylsulfanyl-L-aspartate(89)-[ribosomal protein uS12]-hydrogen + (sulfur carrier)-H + 5'-deoxyadenosine + L-methionine + A + S-adenosyl-L-homocysteine + 2 H(+). Catalyzes the methylthiolation of an aspartic acid residue of ribosomal protein uS12. The polypeptide is Ribosomal protein uS12 methylthiotransferase RimO (Salmonella heidelberg (strain SL476)).